The chain runs to 253 residues: 3-deoxy-manno-octulosonate cytidylyltransferase (253 aa).

This sequence belongs to the KdsB family.

The protein localises to the cytoplasm. The enzyme catalyses 3-deoxy-alpha-D-manno-oct-2-ulosonate + CTP = CMP-3-deoxy-beta-D-manno-octulosonate + diphosphate. It participates in nucleotide-sugar biosynthesis; CMP-3-deoxy-D-manno-octulosonate biosynthesis; CMP-3-deoxy-D-manno-octulosonate from 3-deoxy-D-manno-octulosonate and CTP: step 1/1. It functions in the pathway bacterial outer membrane biogenesis; lipopolysaccharide biosynthesis. In terms of biological role, activates KDO (a required 8-carbon sugar) for incorporation into bacterial lipopolysaccharide in Gram-negative bacteria. The chain is 3-deoxy-manno-octulosonate cytidylyltransferase from Acinetobacter baumannii (strain SDF).